A 584-amino-acid chain; its full sequence is Tyrosine-protein kinase Dnt (584 aa).

A signal peptide spans 1-40 (MESVNKCGKSASTRNCTVKMSRKMWVLSLLALAALQLHSG). Residues 41–208 (SEVAAHLNVF…LETVMLPPTG (168 aa)) lie on the Extracellular side of the membrane. A WIF domain is found at 49 to 180 (VFLNPVEVMR…HLVFRRKKIC (132 aa)). 4 N-linked (GlcNAc...) asparagine glycosylation sites follow: Asn-124, Asn-163, Asn-168, and Asn-183. A helical transmembrane segment spans residues 209 to 229 (LITLVVGVSVAMGSVCLLLMI). At 230-584 (AYCVKGAANK…EFYSQITRYV (355 aa)) the chain is on the cytoplasmic side. The disordered stretch occupies residues 241–261 (QHHQHGGQPMRTSSFQRLNTH). Positions 250 to 261 (MRTSSFQRLNTH) are enriched in polar residues. One can recognise a Protein kinase domain in the interval 317–577 (VRLSSLLQEG…QLQSCLSEFY (261 aa)). ATP-binding positions include 323 to 331 (LQEGTFGRV) and Lys-345. Catalysis depends on Asp-442, which acts as the Proton acceptor. Tyr-472 carries the phosphotyrosine; by autocatalysis modification.

It belongs to the protein kinase superfamily. Tyr protein kinase family. Expressed in dynamic domains in the embryonic epidermis, many of which border on sites of epithelial invagination into the embryo interior, including ventral furrow, cephalic furrow, fore- and hindgut, optic lobe and tracheal pits. Later in embryogenesis, expression is seen in imaginal tissues.

The protein localises to the cell membrane. It carries out the reaction L-tyrosyl-[protein] + ATP = O-phospho-L-tyrosyl-[protein] + ADP + H(+). Functionally, may play an essential role in neuronal pathway recognition and ventral muscle attachment site selection. The sequence is that of Tyrosine-protein kinase Dnt (dnt) from Drosophila melanogaster (Fruit fly).